We begin with the raw amino-acid sequence, 178 residues long: Ribosome maturation factor RimP (178 aa).

Belongs to the RimP family.

The protein resides in the cytoplasm. Required for maturation of 30S ribosomal subunits. The protein is Ribosome maturation factor RimP of Streptococcus pyogenes serotype M1.